Here is a 207-residue protein sequence, read N- to C-terminus: Large ribosomal subunit protein bL25 (207 aa).

Residues 171 to 207 (EEETVVTVSAPRAEEEPTTTEAPEPEAVHGKDEEPVE) form a disordered region. The segment covering 196–207 (EAVHGKDEEPVE) has biased composition (basic and acidic residues).

The protein belongs to the bacterial ribosomal protein bL25 family. CTC subfamily. In terms of assembly, part of the 50S ribosomal subunit; part of the 5S rRNA/L5/L18/L25 subcomplex. Contacts the 5S rRNA. Binds to the 5S rRNA independently of L5 and L18.

Functionally, this is one of the proteins that binds to the 5S RNA in the ribosome where it forms part of the central protuberance. This chain is Large ribosomal subunit protein bL25, found in Listeria monocytogenes serotype 4b (strain F2365).